A 469-amino-acid chain; its full sequence is uncharacterized protein (469 aa).

A coiled-coil region spans residues 11–65; sequence LFISVAFSQESVEDLKRLLEEYKKKIQEIERRLEELEKAKKEEEKKKEAVALKPT.

This is an uncharacterized protein from Aquifex aeolicus (strain VF5).